The sequence spans 873 residues: Envelope glycoprotein B (873 aa).

The N-terminal stretch at 1–21 is a signal peptide; that stretch reads MASLKMLICVCVAILIPSTLS. Topologically, residues 22 to 740 are virion surface; it reads QDSHGIAGII…SGIASFLSNP (719 aa). 5 disulfides stabilise this stretch: Cys-67/Cys-525, Cys-84/Cys-481, Cys-157/Cys-219, Cys-311/Cys-359, and Cys-548/Cys-598. 2 N-linked (GlcNAc...) asparagine; by host glycosylation sites follow: Asn-92 and Asn-111. The involved in fusion and/or binding to host membrane stretch occupies residues 124 to 130; that stretch reads TWALFSR. N-linked (GlcNAc...) asparagine; by host glycosylation is present at Asn-201. Positions 206-213 are involved in fusion and/or binding to host membrane; that stretch reads HQTLGYRT. Residues Asn-252 and Asn-350 are each glycosylated (N-linked (GlcNAc...) asparagine; by host). A disordered region spans residues 418-447; sequence QNHLPRGRERRQAAGRRTASLQSGPQGDRI. N-linked (GlcNAc...) asparagine; by host glycosylation is found at Asn-569, Asn-625, and Asn-639. 2 hydrophobic membrane proximal region regions span residues 684–738 and 715–734; these read IDTV…SFLS and LGTV…SGIA. Residues 741–761 traverse the membrane as a helical segment; it reads FAALGIGIAVVVSIILGLLAF. The Intravirion portion of the chain corresponds to 762–873; the sequence is KYVMNLKSNP…PSWAEESEDE (112 aa). The segment at 781-807 is disordered; the sequence is PPAGTPPRPSRRYYKDEEEVEEDSDED. A compositionally biased stretch (acidic residues) spans 796–807; sequence DEEEVEEDSDED. The short motif at 858 to 861 is the Internalization motif element; it reads YPLL.

The protein belongs to the herpesviridae glycoprotein B family. Homotrimer; disulfide-linked. Binds to heparan sulfate proteoglycans. Interacts with gH/gL heterodimer. A proteolytic cleavage by host furin generates two subunits that remain linked by disulfide bonds.

The protein resides in the virion membrane. It is found in the host cell membrane. It localises to the host endosome membrane. Its subcellular location is the host Golgi apparatus membrane. Envelope glycoprotein that forms spikes at the surface of virion envelope. Essential for the initial attachment to heparan sulfate moieties of the host cell surface proteoglycans. Involved in fusion of viral and cellular membranes leading to virus entry into the host cell. Following initial binding to its host receptors, membrane fusion is mediated by the fusion machinery composed at least of gB and the heterodimer gH/gL. May be involved in the fusion between the virion envelope and the outer nuclear membrane during virion egress. The chain is Envelope glycoprotein B from Infectious laryngotracheitis virus (strain 632) (ILTV).